Here is a 450-residue protein sequence, read N- to C-terminus: Glutamate--tRNA ligase 2 (450 aa).

The 'HIGH' region motif lies at 10 to 20; that stretch reads PSPTGRIHIGN. A 'KMSKS' region motif is present at residues 243-247; it reads GFSKR. K246 lines the ATP pocket.

This sequence belongs to the class-I aminoacyl-tRNA synthetase family. Glutamate--tRNA ligase type 1 subfamily. In terms of assembly, monomer.

It is found in the cytoplasm. It catalyses the reaction tRNA(Glu) + L-glutamate + ATP = L-glutamyl-tRNA(Glu) + AMP + diphosphate. Catalyzes the attachment of glutamate to tRNA(Glu) in a two-step reaction: glutamate is first activated by ATP to form Glu-AMP and then transferred to the acceptor end of tRNA(Glu). The sequence is that of Glutamate--tRNA ligase 2 from Beijerinckia indica subsp. indica (strain ATCC 9039 / DSM 1715 / NCIMB 8712).